Here is a 483-residue protein sequence, read N- to C-terminus: Probable cytosol aminopeptidase (483 aa).

The Mn(2+) site is built by Lys-252 and Asp-257. Residue Lys-264 is part of the active site. 3 residues coordinate Mn(2+): Asp-275, Asp-334, and Glu-336. Arg-338 is an active-site residue.

Belongs to the peptidase M17 family. Mn(2+) is required as a cofactor.

It is found in the cytoplasm. The enzyme catalyses Release of an N-terminal amino acid, Xaa-|-Yaa-, in which Xaa is preferably Leu, but may be other amino acids including Pro although not Arg or Lys, and Yaa may be Pro. Amino acid amides and methyl esters are also readily hydrolyzed, but rates on arylamides are exceedingly low.. The catalysed reaction is Release of an N-terminal amino acid, preferentially leucine, but not glutamic or aspartic acids.. Functionally, presumably involved in the processing and regular turnover of intracellular proteins. Catalyzes the removal of unsubstituted N-terminal amino acids from various peptides. This Legionella pneumophila (strain Corby) protein is Probable cytosol aminopeptidase.